We begin with the raw amino-acid sequence, 388 residues long: Succinate--CoA ligase [ADP-forming] subunit beta (388 aa).

One can recognise an ATP-grasp domain in the interval Lys9–Glu244. Residues Lys46, Gly53–Gly55, Glu99, Ala102, and Glu107 each bind ATP. Mg(2+)-binding residues include Asn199 and Asp213. Residues Asn264 and Gly321–Met323 contribute to the substrate site.

It belongs to the succinate/malate CoA ligase beta subunit family. Heterotetramer of two alpha and two beta subunits. The cofactor is Mg(2+).

The enzyme catalyses succinate + ATP + CoA = succinyl-CoA + ADP + phosphate. The catalysed reaction is GTP + succinate + CoA = succinyl-CoA + GDP + phosphate. It participates in carbohydrate metabolism; tricarboxylic acid cycle; succinate from succinyl-CoA (ligase route): step 1/1. Succinyl-CoA synthetase functions in the citric acid cycle (TCA), coupling the hydrolysis of succinyl-CoA to the synthesis of either ATP or GTP and thus represents the only step of substrate-level phosphorylation in the TCA. The beta subunit provides nucleotide specificity of the enzyme and binds the substrate succinate, while the binding sites for coenzyme A and phosphate are found in the alpha subunit. The sequence is that of Succinate--CoA ligase [ADP-forming] subunit beta from Ralstonia pickettii (strain 12J).